The primary structure comprises 88 residues: DNA-directed RNA polymerase subunit omega (88 aa).

The protein belongs to the RNA polymerase subunit omega family. The RNAP catalytic core consists of 2 alpha, 1 beta, 1 beta' and 1 omega subunit. When a sigma factor is associated with the core the holoenzyme is formed, which can initiate transcription.

It carries out the reaction RNA(n) + a ribonucleoside 5'-triphosphate = RNA(n+1) + diphosphate. Functionally, promotes RNA polymerase assembly. Latches the N- and C-terminal regions of the beta' subunit thereby facilitating its interaction with the beta and alpha subunits. This chain is DNA-directed RNA polymerase subunit omega, found in Haemophilus influenzae (strain 86-028NP).